The primary structure comprises 91 residues: Small ribosomal subunit protein bS6 (91 aa).

This sequence belongs to the bacterial ribosomal protein bS6 family.

In terms of biological role, binds together with bS18 to 16S ribosomal RNA. This chain is Small ribosomal subunit protein bS6, found in Leptospira borgpetersenii serovar Hardjo-bovis (strain JB197).